The primary structure comprises 502 residues: Maturase K (502 aa).

The protein belongs to the intron maturase 2 family. MatK subfamily.

The protein resides in the plastid. The protein localises to the chloroplast. Its function is as follows. Usually encoded in the trnK tRNA gene intron. Probably assists in splicing its own and other chloroplast group II introns. The chain is Maturase K from Vitis vinifera (Grape).